We begin with the raw amino-acid sequence, 241 residues long: Copper transport protein CTR3 (241 aa).

Topologically, residues 1–41 (MNMGGSSSTAAKKATCKISMLWNWYTIDTCFIARSWRNDTK) are lumenal. A helical transmembrane segment spans residues 42 to 62 (GKFAGSCIGCFALVVVAQWLT). The Cytoplasmic portion of the chain corresponds to 63–159 (RFSRQFDVEL…SCCTLITPVD (97 aa)). The helical transmembrane segment at 160–180 (LYPTFLDHMIRVTIFVLQWGL) threads the bilayer. At 181–182 (SY) the chain is on the lumenal side. Residues 183–203 (IIMLLFMYYNGYIIISCLIGA) traverse the membrane as a helical segment. Over 204–241 (IVGRFIFCYEPLGSLGANGSAQGTVSYDKESDDRKCCL) the chain is Cytoplasmic.

It belongs to the copper transporter (Ctr) (TC 1.A.56) family. SLC31A subfamily.

Its subcellular location is the cytoplasmic vesicle membrane. In terms of biological role, required for high affinity copper (probably reduced Cu I) transport into the cell. This is Copper transport protein CTR3 (CTR3) from Saccharomyces cerevisiae (strain ATCC 204508 / S288c) (Baker's yeast).